We begin with the raw amino-acid sequence, 384 residues long: UDP-galactopyranose mutase (384 aa).

Residues 1-23 (MKSKKILIVGAGFSGAVIGRQLA) form the signal peptide. FAD is bound by residues serine 14, 33-34 (DQ), asparagine 41, and 60-61 (HI). UDP-alpha-D-galactose-binding residues include asparagine 84, phenylalanine 151, threonine 156, tryptophan 160, and tyrosine 185. Phenylalanine 219 serves as a coordination point for FAD. UDP-alpha-D-galactose-binding residues include asparagine 270, arginine 280, and tyrosine 314. An FAD-binding site is contributed by arginine 343. Tyrosine 349 is a binding site for UDP-alpha-D-galactose. 350–355 (LDMDVT) is a binding site for FAD.

The protein belongs to the UDP-galactopyranose/dTDP-fucopyranose mutase family. In terms of assembly, homodimer. It depends on FAD as a cofactor.

The catalysed reaction is UDP-alpha-D-galactose = UDP-alpha-D-galactofuranose. It functions in the pathway bacterial outer membrane biogenesis; LPS O-antigen biosynthesis. In terms of biological role, involved in the biosynthesis of the galactose-containing O-side-chain polysaccharide backbone structure of D-galactan I which is a key component of lipopolysaccharide (LPS). Catalyzes the interconversion through a 2-keto intermediate of uridine diphosphogalactopyranose (UDP-GalP) into uridine diphosphogalactofuranose (UDP-GalF) which is the biosynthetic precursor of galactofuranosyl residues. This is UDP-galactopyranose mutase (rfbD) from Klebsiella pneumoniae.